We begin with the raw amino-acid sequence, 392 residues long: Elongation factor Tu (392 aa).

One can recognise a tr-type G domain in the interval 10-202; the sequence is KVHVNVGTIG…VLDEYIEDPI (193 aa). A G1 region spans residues 19-26; it reads GHVDHGKT. 19-26 provides a ligand contact to GTP; sequence GHVDHGKT. Thr-26 contacts Mg(2+). The tract at residues 60 to 64 is G2; it reads GITIN. Residues 81–84 form a G3 region; that stretch reads DCPG. GTP contacts are provided by residues 81–85 and 136–139; these read DCPGH and NKCD. The segment at 136-139 is G4; sequence NKCD. Residues 174-176 form a G5 region; sequence SAL.

This sequence belongs to the TRAFAC class translation factor GTPase superfamily. Classic translation factor GTPase family. EF-Tu/EF-1A subfamily. In terms of assembly, monomer.

It is found in the cytoplasm. The catalysed reaction is GTP + H2O = GDP + phosphate + H(+). In terms of biological role, GTP hydrolase that promotes the GTP-dependent binding of aminoacyl-tRNA to the A-site of ribosomes during protein biosynthesis. The protein is Elongation factor Tu of Phytoplasma mali (strain AT).